A 211-amino-acid chain; its full sequence is Dual specificity protein phosphatase 26 (211 aa).

One can recognise a Tyrosine-protein phosphatase domain in the interval 60-207 (NHADEVWPGL…LLALDRRLRQ (148 aa)). The active-site Phosphocysteine intermediate is the Cys-152.

The protein belongs to the protein-tyrosine phosphatase family. Non-receptor class dual specificity subfamily. As to quaternary structure, interacts with HSF4.

The protein resides in the cytoplasm. Its subcellular location is the nucleus. It is found in the golgi apparatus. The enzyme catalyses O-phospho-L-tyrosyl-[protein] + H2O = L-tyrosyl-[protein] + phosphate. It carries out the reaction O-phospho-L-seryl-[protein] + H2O = L-seryl-[protein] + phosphate. The catalysed reaction is O-phospho-L-threonyl-[protein] + H2O = L-threonyl-[protein] + phosphate. Functionally, inactivates MAPK1 and MAPK3 which leads to dephosphorylation of heat shock factor protein 4 and a reduction in its DNA-binding activity. The sequence is that of Dual specificity protein phosphatase 26 (Dusp26) from Rattus norvegicus (Rat).